The primary structure comprises 303 residues: Cathepsin B-like CP1 (303 aa).

The N-terminal stretch at Met1–Ala19 is a signal peptide. An N-linked (GlcNAc...) asparagine glycan is attached at Asn41. Intrachain disulfides connect Cys92–Cys119, Cys102–Cys145, and Cys138–Cys181. The active site involves Cys105. Catalysis depends on residues His249 and Asn270.

It belongs to the peptidase C1 family.

It is found in the vacuole. Thiol protease which is required for parasite excystation and invasion of the proximal small intestine of the human host. The chain is Cathepsin B-like CP1 (CP1) from Giardia intestinalis (Giardia lamblia).